A 1013-amino-acid chain; its full sequence is Ephrin type-A receptor 5 (1013 aa).

The signal sequence occupies residues 1 to 31; that stretch reads MGLRGGGGRAGGPAPGWTCLLLCAALRSLLA. At 32–549 the chain is on the extracellular side; the sequence is SPGSEVNLLD…AASSDQSQIP (518 aa). The Eph LBD domain occupies 36–214; that stretch reads EVNLLDSRTV…YYKKCPSVIR (179 aa). N-linked (GlcNAc...) asparagine glycosylation is found at Asn-240, Asn-275, Asn-345, Asn-399, Asn-412, and Asn-437. Fibronectin type-III domains follow at residues 333–443 and 444–538; these read PPSA…TNQA and APSP…TSPV. The helical transmembrane segment at 550–570 threads the bilayer; that stretch reads IIVVSVTVGVILLAVVIGFLL. At 571 to 1013 the chain is on the cytoplasmic side; it reads SGSCCDHGCG…VQLVNGMVPL (443 aa). Phosphotyrosine; by autocatalysis occurs at positions 626 and 632. Residues 651 to 912 enclose the Protein kinase domain; it reads ITIERVIGAG…EIVSMLDKLI (262 aa). Residues 657-665 and Lys-683 each bind ATP; that span reads IGAGEFGEV. Catalysis depends on Asp-776, which acts as the Proton acceptor. 2 positions are modified to phosphotyrosine; by autocatalysis: Tyr-809 and Tyr-958. Positions 941 to 1013 constitute an SAM domain; that stretch reads GAYRSVGEWL…VQLVNGMVPL (73 aa). The PDZ-binding signature appears at 1011–1013; sequence VPL.

This sequence belongs to the protein kinase superfamily. Tyr protein kinase family. Ephrin receptor subfamily. Heterotetramer upon binding of the ligand. The heterotetramer is composed of an ephrin dimer and a receptor dimer. Oligomerization is probably required to induce biological responses. Post-translationally, phosphorylated. Phosphorylation is stimulated by the ligand EFNA5. As to expression, detected in the 10-day embryonic brain, weaker expression in the rest of the 10-day embryo. Undetected in adult tissues.

The protein resides in the cell membrane. The protein localises to the cell projection. It localises to the axon. Its subcellular location is the dendrite. It carries out the reaction L-tyrosyl-[protein] + ATP = O-phospho-L-tyrosyl-[protein] + ADP + H(+). Receptor tyrosine kinase which binds promiscuously GPI-anchored ephrin-A family ligands residing on adjacent cells, leading to contact-dependent bidirectional signaling into neighboring cells. The signaling pathway downstream of the receptor is referred to as forward signaling while the signaling pathway downstream of the ephrin ligand is referred to as reverse signaling. Among GPI-anchored ephrin-A ligands, EFNA5 most probably constitutes the cognate/functional ligand for EPHA5. Functions as an axon guidance molecule during development and may be involved in the development of the retinotectal, entorhino-hippocampal and hippocamposeptal pathways. Together with EFNA5 plays also a role in synaptic plasticity in adult brain through regulation of synaptogenesis. This Gallus gallus (Chicken) protein is Ephrin type-A receptor 5 (EPHA5).